The chain runs to 473 residues: UDP-N-acetylmuramate--L-alanine ligase (473 aa).

ATP is bound at residue 114–120 (GTHGKTT).

It belongs to the MurCDEF family.

The protein localises to the cytoplasm. The catalysed reaction is UDP-N-acetyl-alpha-D-muramate + L-alanine + ATP = UDP-N-acetyl-alpha-D-muramoyl-L-alanine + ADP + phosphate + H(+). The protein operates within cell wall biogenesis; peptidoglycan biosynthesis. In terms of biological role, cell wall formation. This Chlorobium luteolum (strain DSM 273 / BCRC 81028 / 2530) (Pelodictyon luteolum) protein is UDP-N-acetylmuramate--L-alanine ligase.